Consider the following 912-residue polypeptide: Transcription factor bHLH140 (912 aa).

The tract at residues 1–57 (MDDFNLRSENPNSSSTTSSSSSSFHRHKSETGNTKRSRSTSTLSTDPQSVAARDRRH) is disordered. Low complexity predominate over residues 13 to 23 (SSSTTSSSSSS). The bHLH domain maps to 43 to 92 (LSTDPQSVAARDRRHRISDRFKILQSMVPGGAKMDTVSMLDEAISYVKFL). 234–241 (GPPGSGKS) contacts ATP. The region spanning 511–690 (KAKASQKNID…KYKGSQDKAV (180 aa)) is the Macro domain. Residues 657–666 (PKRSSQTAVS) are compositionally biased toward polar residues. The tract at residues 657–706 (PKRSSQTAVSDSGEDIKEDSERNKKYKGSQDKAVTNNLESESLEDTRGSG) is disordered. The HIT domain occupies 720-829 (LHSIAMHPER…SQDFNSDSLK (110 aa)). The segment at 870-893 (LRCNRCRSAHPNIPKLKSHVRSCH) adopts a C2H2-type zinc-finger fold.

As to quaternary structure, homodimer.

The protein localises to the nucleus. The protein is Transcription factor bHLH140 (BHLH140) of Arabidopsis thaliana (Mouse-ear cress).